We begin with the raw amino-acid sequence, 142 residues long: Small ribosomal subunit protein bS18m (142 aa).

This sequence belongs to the bacterial ribosomal protein bS18 family. In terms of assembly, component of the mitochondrial small ribosomal subunit (mt-SSU). Mature mammalian 55S mitochondrial ribosomes consist of a small (28S) and a large (39S) subunit. The 28S small subunit contains a 12S ribosomal RNA (12S mt-rRNA) and 30 different proteins. The 39S large subunit contains a 16S rRNA (16S mt-rRNA), a copy of mitochondrial valine transfer RNA (mt-tRNA(Val)), which plays an integral structural role, and 52 different proteins. bS18m has a zinc binding site.

The protein localises to the mitochondrion. The chain is Small ribosomal subunit protein bS18m (MRPS18C) from Homo sapiens (Human).